Here is a 149-residue protein sequence, read N- to C-terminus: D-aminoacyl-tRNA deacylase (149 aa).

Positions 137 to 138 match the Gly-cisPro motif, important for rejection of L-amino acids motif; sequence GP.

It belongs to the DTD family. As to quaternary structure, homodimer.

Its subcellular location is the cytoplasm. The catalysed reaction is glycyl-tRNA(Ala) + H2O = tRNA(Ala) + glycine + H(+). It carries out the reaction a D-aminoacyl-tRNA + H2O = a tRNA + a D-alpha-amino acid + H(+). In terms of biological role, an aminoacyl-tRNA editing enzyme that deacylates mischarged D-aminoacyl-tRNAs. Also deacylates mischarged glycyl-tRNA(Ala), protecting cells against glycine mischarging by AlaRS. Acts via tRNA-based rather than protein-based catalysis; rejects L-amino acids rather than detecting D-amino acids in the active site. By recycling D-aminoacyl-tRNA to D-amino acids and free tRNA molecules, this enzyme counteracts the toxicity associated with the formation of D-aminoacyl-tRNA entities in vivo and helps enforce protein L-homochirality. This Thermoanaerobacter pseudethanolicus (strain ATCC 33223 / 39E) (Clostridium thermohydrosulfuricum) protein is D-aminoacyl-tRNA deacylase.